A 234-amino-acid chain; its full sequence is 1-(5-phosphoribosyl)-5-[(5-phosphoribosylamino)methylideneamino] imidazole-4-carboxamide isomerase (234 aa).

The active-site Proton acceptor is D9. Residue D131 is the Proton donor of the active site.

This sequence belongs to the HisA/HisF family.

The protein resides in the cytoplasm. The catalysed reaction is 1-(5-phospho-beta-D-ribosyl)-5-[(5-phospho-beta-D-ribosylamino)methylideneamino]imidazole-4-carboxamide = 5-[(5-phospho-1-deoxy-D-ribulos-1-ylimino)methylamino]-1-(5-phospho-beta-D-ribosyl)imidazole-4-carboxamide. It participates in amino-acid biosynthesis; L-histidine biosynthesis; L-histidine from 5-phospho-alpha-D-ribose 1-diphosphate: step 4/9. In Staphylococcus saprophyticus subsp. saprophyticus (strain ATCC 15305 / DSM 20229 / NCIMB 8711 / NCTC 7292 / S-41), this protein is 1-(5-phosphoribosyl)-5-[(5-phosphoribosylamino)methylideneamino] imidazole-4-carboxamide isomerase.